The primary structure comprises 221 residues: GNVDFDSESPRKPEIQNEIIDLHNSLRRSVNPTASNMLKMEWYPEAAANAERWAFRCILSHSPRDSRVIGGIKCGENIYMSTSPMKWTAIIHKWHGEEKDFVYGQGASPANAVVGHYTQIVWYKSYRSGCAAAYCPSSEYKYFYVCQYCPAGNMQGKTATPYTSGPPCGDCPSACDNGLCTNPCTHEDKFTNCKDLVKQGCNNNYLKTNCPASCSCHNEII.

Residue Gly1 is a signal peptide. In terms of domain architecture, SCP spans 21–148 (DLHNSLRRSV…EYKYFYVCQY (128 aa)). 8 disulfides stabilise this stretch: Cys57–Cys135, Cys74–Cys149, Cys130–Cys146, Cys168–Cys175, Cys171–Cys180, Cys184–Cys216, Cys193–Cys210, and Cys201–Cys214. One can recognise a ShKT domain in the interval 184–216 (CTHEDKFTNCKDLVKQGCNNNYLKTNCPASCSC).

The protein belongs to the CRISP family. Expressed by the venom gland.

It is found in the secreted. Blocks contraction of smooth muscle elicited by high potassium-induced depolarization, but does not block caffeine-stimulated contraction. May target voltage-gated calcium channels in smooth muscle. The sequence is that of Cysteine-rich venom protein from Vipera nikolskii (Nikolsky's adder).